Consider the following 176-residue polypeptide: Urease accessory protein UreE (176 aa).

Positions 147–176 (AGAYQQGGGHSHGHAHSHSHEKPHSHTHNH) are disordered.

The protein belongs to the UreE family.

The protein resides in the cytoplasm. Functionally, involved in urease metallocenter assembly. Binds nickel. Probably functions as a nickel donor during metallocenter assembly. This is Urease accessory protein UreE from Alcanivorax borkumensis (strain ATCC 700651 / DSM 11573 / NCIMB 13689 / SK2).